Consider the following 421-residue polypeptide: Histidine--tRNA ligase (421 aa).

The protein belongs to the class-II aminoacyl-tRNA synthetase family.

It is found in the cytoplasm. The catalysed reaction is tRNA(His) + L-histidine + ATP = L-histidyl-tRNA(His) + AMP + diphosphate + H(+). In Pyrobaculum islandicum (strain DSM 4184 / JCM 9189 / GEO3), this protein is Histidine--tRNA ligase.